Consider the following 257-residue polypeptide: Phosphate import ATP-binding protein PstB (257 aa).

Positions 4–252 (LKLNDVNIYY…PDNKETEDYI (249 aa)) constitute an ABC transporter domain. ATP is bound at residue 36–43 (GPSGCGKS).

Belongs to the ABC transporter superfamily. Phosphate importer (TC 3.A.1.7) family. In terms of assembly, the complex is composed of two ATP-binding proteins (PstB), two transmembrane proteins (PstC and PstA) and a solute-binding protein (PstS).

Its subcellular location is the cell membrane. The enzyme catalyses phosphate(out) + ATP + H2O = ADP + 2 phosphate(in) + H(+). In terms of biological role, part of the ABC transporter complex PstSACB involved in phosphate import. Responsible for energy coupling to the transport system. In Corynebacterium efficiens (strain DSM 44549 / YS-314 / AJ 12310 / JCM 11189 / NBRC 100395), this protein is Phosphate import ATP-binding protein PstB.